Reading from the N-terminus, the 79-residue chain is Acyl carrier protein (79 aa).

The Carrier domain occupies 2–77; the sequence is SDVAERVKKI…DAVNFLEKAT (76 aa). Ser-37 carries the O-(pantetheine 4'-phosphoryl)serine modification.

It belongs to the acyl carrier protein (ACP) family. 4'-phosphopantetheine is transferred from CoA to a specific serine of apo-ACP by AcpS. This modification is essential for activity because fatty acids are bound in thioester linkage to the sulfhydryl of the prosthetic group.

The protein resides in the cytoplasm. It functions in the pathway lipid metabolism; fatty acid biosynthesis. Its function is as follows. Carrier of the growing fatty acid chain in fatty acid biosynthesis. The chain is Acyl carrier protein from Methylocella silvestris (strain DSM 15510 / CIP 108128 / LMG 27833 / NCIMB 13906 / BL2).